The sequence spans 811 residues: Ent-13-epi-manoyl oxide synthase KSL2, chloroplastic (811 aa).

The transit peptide at 1 to 49 (MALPLSTCLLFHPKESRSRRFCFSPASAASLKSGLHSATSAKIASMPTC) directs the protein to the chloroplast. 4 residues coordinate Mg(2+): D550, D554, N694, and E702. Residues 550 to 554 (DDFFD) carry the DDXXD motif motif.

The protein belongs to the terpene synthase family. Requires Mg(2+) as cofactor.

The protein resides in the plastid. The protein localises to the chloroplast. It catalyses the reaction ent-8alpha-hydroxylabd-13-en-15-yl diphosphate = ent-13-epi-manoyl oxide + diphosphate. The protein operates within secondary metabolite biosynthesis; terpenoid biosynthesis. Involved in diterpenoid biosynthesis. Catalyzes the conversion of ent-8alpha-hydroxylabd-13-en-15-yl diphosphate to ent-13-epi-manoyl oxide. The protein is Ent-13-epi-manoyl oxide synthase KSL2, chloroplastic of Salvia miltiorrhiza (Chinese sage).